A 454-amino-acid polypeptide reads, in one-letter code: Glutamate mutase epsilon subunit (454 aa).

Residue Arg-67 coordinates L-glutamate. Adenosylcob(III)alamin is bound at residue Gly-69. Arg-99 is a binding site for L-glutamate. Position 122 (Asn-122) interacts with adenosylcob(III)alamin. Residues 148–149 (RH), Glu-170, and Tyr-176 each bind L-glutamate. Pro-179 lines the adenosylcob(III)alamin pocket. L-glutamate is bound at residue Tyr-180. The adenosylcob(III)alamin site is built by Phe-296, Lys-325, Glu-329, and Ile-333.

This sequence belongs to the methylaspartate mutase GlmE subunit family. In terms of assembly, heterotetramer composed of 2 epsilon subunits (GlmE) and 2 sigma subunits (GlmS). GlmE exists as a homodimer and GlmS as a monomer. The cofactor is adenosylcob(III)alamin.

The catalysed reaction is (2S,3S)-3-methyl-L-aspartate = L-glutamate. The protein operates within amino-acid degradation; L-glutamate degradation via mesaconate pathway; acetate and pyruvate from L-glutamate: step 1/4. Its function is as follows. Catalyzes the carbon skeleton rearrangement of L-glutamate to L-threo-3-methylaspartate ((2S,3S)-3-methylaspartate). The chain is Glutamate mutase epsilon subunit from Shigella dysenteriae serotype 1 (strain Sd197).